Consider the following 76-residue polypeptide: Small ribosomal subunit protein bS21A (76 aa).

The segment covering 35–52 (HYEKPSEKRAREKAEAVR) has biased composition (basic and acidic residues). The segment at 35 to 76 (HYEKPSEKRAREKAEAVRRARKLARKRAQREGLVSGRPAAAR) is disordered. The segment covering 53-62 (RARKLARKRA) has biased composition (basic residues).

The protein belongs to the bacterial ribosomal protein bS21 family.

The sequence is that of Small ribosomal subunit protein bS21A from Chelativorans sp. (strain BNC1).